The sequence spans 411 residues: Tyrosine--tRNA ligase (411 aa).

Residue Y34 coordinates L-tyrosine. The 'HIGH' region motif lies at 39–48; that stretch reads CTATSLHIGS. Residues Y171 and Q175 each coordinate L-tyrosine. The 'KMSKS' region signature appears at 231-235; sequence KMGKT. Residue K234 coordinates ATP. Positions 345 to 411 constitute an S4 RNA-binding domain; it reads ISAYELFHEA…GKKRHILVRV (67 aa).

This sequence belongs to the class-I aminoacyl-tRNA synthetase family. TyrS type 1 subfamily. Homodimer.

It is found in the cytoplasm. It carries out the reaction tRNA(Tyr) + L-tyrosine + ATP = L-tyrosyl-tRNA(Tyr) + AMP + diphosphate + H(+). Catalyzes the attachment of tyrosine to tRNA(Tyr) in a two-step reaction: tyrosine is first activated by ATP to form Tyr-AMP and then transferred to the acceptor end of tRNA(Tyr). The polypeptide is Tyrosine--tRNA ligase (Rickettsia massiliae (strain Mtu5)).